The sequence spans 152 residues: D-aminoacyl-tRNA deacylase (152 aa).

The Gly-cisPro motif, important for rejection of L-amino acids signature appears at 142–143 (GP).

It belongs to the DTD family. As to quaternary structure, homodimer.

It localises to the cytoplasm. It carries out the reaction glycyl-tRNA(Ala) + H2O = tRNA(Ala) + glycine + H(+). It catalyses the reaction a D-aminoacyl-tRNA + H2O = a tRNA + a D-alpha-amino acid + H(+). Its function is as follows. An aminoacyl-tRNA editing enzyme that deacylates mischarged D-aminoacyl-tRNAs. Also deacylates mischarged glycyl-tRNA(Ala), protecting cells against glycine mischarging by AlaRS. Acts via tRNA-based rather than protein-based catalysis; rejects L-amino acids rather than detecting D-amino acids in the active site. By recycling D-aminoacyl-tRNA to D-amino acids and free tRNA molecules, this enzyme counteracts the toxicity associated with the formation of D-aminoacyl-tRNA entities in vivo and helps enforce protein L-homochirality. In Burkholderia multivorans (strain ATCC 17616 / 249), this protein is D-aminoacyl-tRNA deacylase.